The following is a 106-amino-acid chain: ATP-dependent Clp protease adapter protein ClpS (106 aa).

It belongs to the ClpS family. As to quaternary structure, binds to the N-terminal domain of the chaperone ClpA.

Functionally, involved in the modulation of the specificity of the ClpAP-mediated ATP-dependent protein degradation. This Sodalis glossinidius (strain morsitans) protein is ATP-dependent Clp protease adapter protein ClpS.